The following is a 137-amino-acid chain: Small ribosomal subunit protein bS16 (137 aa).

The protein belongs to the bacterial ribosomal protein bS16 family.

This Leuconostoc citreum (strain KM20) protein is Small ribosomal subunit protein bS16.